The sequence spans 147 residues: uncharacterized protein (147 aa).

Belongs to the limonene-1,2-epoxide hydrolase family.

This is an uncharacterized protein from Bacillus subtilis (strain 168).